Here is a 495-residue protein sequence, read N- to C-terminus: Aspartyl/glutamyl-tRNA(Asn/Gln) amidotransferase subunit B (495 aa).

Belongs to the GatB/GatE family. GatB subfamily. In terms of assembly, heterotrimer of A, B and C subunits.

The catalysed reaction is L-glutamyl-tRNA(Gln) + L-glutamine + ATP + H2O = L-glutaminyl-tRNA(Gln) + L-glutamate + ADP + phosphate + H(+). The enzyme catalyses L-aspartyl-tRNA(Asn) + L-glutamine + ATP + H2O = L-asparaginyl-tRNA(Asn) + L-glutamate + ADP + phosphate + 2 H(+). Its function is as follows. Allows the formation of correctly charged Asn-tRNA(Asn) or Gln-tRNA(Gln) through the transamidation of misacylated Asp-tRNA(Asn) or Glu-tRNA(Gln) in organisms which lack either or both of asparaginyl-tRNA or glutaminyl-tRNA synthetases. The reaction takes place in the presence of glutamine and ATP through an activated phospho-Asp-tRNA(Asn) or phospho-Glu-tRNA(Gln). The sequence is that of Aspartyl/glutamyl-tRNA(Asn/Gln) amidotransferase subunit B from Methanosarcina barkeri (strain Fusaro / DSM 804).